The sequence spans 263 residues: N-glycosylase/DNA lyase (263 aa).

3 residues coordinate 8-oxoguanine: Q43, S71, and W82. The tract at residues R139–E204 is helix-hairpin-helix. Catalysis depends on K164, which acts as the Schiff-base intermediate with DNA. 8-oxoguanine-binding residues include F168 and P194. D196 is a catalytic residue. 8-oxoguanine is bound by residues D230 and W234.

The protein belongs to the archaeal N-glycosylase/DNA lyase (AGOG) family.

The catalysed reaction is 2'-deoxyribonucleotide-(2'-deoxyribose 5'-phosphate)-2'-deoxyribonucleotide-DNA = a 3'-end 2'-deoxyribonucleotide-(2,3-dehydro-2,3-deoxyribose 5'-phosphate)-DNA + a 5'-end 5'-phospho-2'-deoxyribonucleoside-DNA + H(+). Its function is as follows. DNA repair enzyme that is part of the base excision repair (BER) pathway; protects from oxidative damage by removing the major product of DNA oxidation, 8-oxoguanine (GO), from single- and double-stranded DNA substrates. This Thermococcus kodakarensis (strain ATCC BAA-918 / JCM 12380 / KOD1) (Pyrococcus kodakaraensis (strain KOD1)) protein is N-glycosylase/DNA lyase.